A 225-amino-acid chain; its full sequence is UPF0700 transmembrane protein YoaK (225 aa).

6 helical membrane-spanning segments follow: residues Leu-10 to Gly-30, Val-56 to Met-76, Ile-99 to Ile-119, Gly-137 to Ile-157, Thr-174 to Ala-194, and Asp-197 to Ala-217.

Belongs to the UPF0700 family.

The protein localises to the cell membrane. The polypeptide is UPF0700 transmembrane protein YoaK (yoaK) (Bacillus subtilis (strain 168)).